Reading from the N-terminus, the 212-residue chain is Orotate phosphoribosyltransferase (212 aa).

5-phospho-alpha-D-ribose 1-diphosphate contacts are provided by residues R95, K99, H101, and 121–129 (DDLITTGGS). T125 serves as a coordination point for orotate.

This sequence belongs to the purine/pyrimidine phosphoribosyltransferase family. PyrE subfamily. As to quaternary structure, homodimer. The cofactor is Mg(2+).

It carries out the reaction orotidine 5'-phosphate + diphosphate = orotate + 5-phospho-alpha-D-ribose 1-diphosphate. It functions in the pathway pyrimidine metabolism; UMP biosynthesis via de novo pathway; UMP from orotate: step 1/2. Catalyzes the transfer of a ribosyl phosphate group from 5-phosphoribose 1-diphosphate to orotate, leading to the formation of orotidine monophosphate (OMP). The sequence is that of Orotate phosphoribosyltransferase from Lactobacillus johnsonii (strain CNCM I-12250 / La1 / NCC 533).